The sequence spans 614 residues: MSGYSSDRDRGRDRGFGAPRFGGSRAGPLSGKKFGNPGEKLVKKKWNLDELPKFEKNFYQEHPDLARRTAQEVETYRRSKEITVRGHNCPKPVLNFYEANFPANVMDVIARQNFTEPTAIQAQGWPVALSGLDMVGVAQTGSGKTLSYLLPAIVHINHQPFLERGDGPICLVLAPTRELAQQVQQVAAEYCRACRLKSTCIYGGAPKGPQIRDLERGVEICIATPGRLIDFLECGKTNLRRTTYLVLDEADRMLDMGFEPQIRKIVDQIRPDRQTLMWSATWPKEVRQLAEDFLKDYIHINIGALELSANHNILQIVDVCHDVEKDEKLIRLMEEIMSEKENKTIVFVETKRRCDELTRKMRRDGWPAMGIHGDKSQQERDWVLNEFKHGKAPILIATDVASRGLDVEDVKFVINYDYPNSSEDYIHRIGRTARSTKTGTAYTFFTPNNIKQVSDLISVLREANQAINPKLLQLVEDRGSGRSRGRGGMKDDRRDRYSAGKRGGFNTFRDRENYDRGYSSLLKRDFGAKTQNGVYSAANYTNGSFGSNFVSAGIQTSFRTGNPTGTYQNGYDSTQQYGSNVPNMHNGMNQQAYAYPATAAAPMIGYPMPTGYSQ.

Residues M1–G15 show a composition bias toward basic and acidic residues. The disordered stretch occupies residues M1–E39. The residue at position 24 (S24) is a Phosphoserine. K32 carries the post-translational modification N6-acetyllysine; alternate. A Glycyl lysine isopeptide (Lys-Gly) (interchain with G-Cter in SUMO2); alternate cross-link involves residue K32. 2 positions are modified to N6-acetyllysine: K33 and K40. K45 is covalently cross-linked (Glycyl lysine isopeptide (Lys-Gly) (interchain with G-Cter in SUMO2)). A Glycyl lysine isopeptide (Lys-Gly) (interchain with G-Cter in SUMO2); alternate cross-link involves residue K53. Residue K53 forms a Glycyl lysine isopeptide (Lys-Gly) (interchain with G-Cter in SUMO); alternate linkage. K53 participates in a covalent cross-link: Glycyl lysine isopeptide (Lys-Gly) (interchain with G-Cter in SUMO1); alternate. Residues L94–A122 carry the Q motif motif. Residues F114–E116, Q121, and A138–T145 each bind ATP. Residues W125–I300 enclose the Helicase ATP-binding domain. N6-acetyllysine is present on K236. The short motif at D248 to D251 is the DEAD box element. Y297 bears the Phosphotyrosine mark. Positions K328–V475 constitute a Helicase C-terminal domain. Glycyl lysine isopeptide (Lys-Gly) (interchain with G-Cter in SUMO2) cross-links involve residues K340, K343, K388, K391, K411, K437, K451, and K470. The disordered stretch occupies residues D477 to G504. The segment at D477 to Q614 is transactivation domain. A Phosphoserine modification is found at S480. The segment covering G488–S498 has biased composition (basic and acidic residues). Position 520 is a phosphoserine (S520). Residue K523 forms a Glycyl lysine isopeptide (Lys-Gly) (interchain with G-Cter in SUMO2) linkage.

This sequence belongs to the DEAD box helicase family. DDX5/DBP2 subfamily. In terms of assembly, identified in the spliceosome C complex. Component of a ribonucleoprotein complex containing mRNAs and RNA-binding proteins including DDX5, HNRNPH2 and SRSF1 as well as splicing regulator ARVCF. Interacts with RBM4; the interaction occurs in an RNA-independent manner. Interacts with AGO1 and AGO2. Interacts with ESR1, AR, EP300, CREBBP, POLR2A, TP53, RUNX2 and HDAC1. Self-associates. Interacts with DDX17. Interacts with BRDT. The large PER complex involved in the repression of transcriptional termination is composed of at least PER2, CDK9, DDX5, DHX9, NCBP1 and POLR2A (active). Interacts with DHX36; this interaction occurs in a RNA-dependent manner. Interacts with NUPR1. Interacts with ERCC6. Interacts with DDX3X in the cytoplasm; this interaction may be more efficient when both proteins are unphosphorylated. Arg-502 is dimethylated, probably to asymmetric dimethylarginine. Post-translationally, sumoylated; sumoylation, promoted by PIAS1, promotes interaction with HDAC1 and transcriptional repression activity. Sumoylation also significantly increases stability, and reduces polyubiquitination. In terms of processing, polyubiquitinated, leading to proteasomal degradation. Weakly phosphorylated in the G1/S phase of the cell cycle and much more at G2/M, especially at Thr and Tyr residues.

The protein resides in the nucleus. Its subcellular location is the nucleolus. The protein localises to the nucleus speckle. It localises to the cytoplasm. It catalyses the reaction ATP + H2O = ADP + phosphate + H(+). Involved in the alternative regulation of pre-mRNA splicing; its RNA helicase activity is necessary for increasing tau exon 10 inclusion and occurs in a RBM4-dependent manner. Binds to the tau pre-mRNA in the stem-loop region downstream of exon 10. The rate of ATP hydrolysis is highly stimulated by single-stranded RNA. Involved in transcriptional regulation; the function is independent of the RNA helicase activity. Transcriptional coactivator for androgen receptor AR but probably not ESR1. Synergizes with DDX17 and SRA1 RNA to activate MYOD1 transcriptional activity and involved in skeletal muscle differentiation. Transcriptional coactivator for p53/TP53 and involved in p53/TP53 transcriptional response to DNA damage and p53/TP53-dependent apoptosis. Transcriptional coactivator for RUNX2 and involved in regulation of osteoblast differentiation. Acts as a transcriptional repressor in a promoter-specific manner; the function probably involves association with histone deacetylases, such as HDAC1. As component of a large PER complex is involved in the inhibition of 3' transcriptional termination of circadian target genes such as PER1 and NR1D1 and the control of the circadian rhythms. The chain is Probable ATP-dependent RNA helicase DDX5 (DDX5) from Homo sapiens (Human).